A 311-amino-acid polypeptide reads, in one-letter code: Large ribosomal subunit protein uL22 (311 aa).

It belongs to the universal ribosomal protein uL22 family. In terms of assembly, part of the 50S ribosomal subunit.

This protein binds specifically to 23S rRNA; its binding is stimulated by other ribosomal proteins, e.g. L4, L17, and L20. It is important during the early stages of 50S assembly. It makes multiple contacts with different domains of the 23S rRNA in the assembled 50S subunit and ribosome. Functionally, the globular domain of the protein is located near the polypeptide exit tunnel on the outside of the subunit, while an extended beta-hairpin is found that lines the wall of the exit tunnel in the center of the 70S ribosome. The polypeptide is Large ribosomal subunit protein uL22 (rplV) (Ureaplasma parvum serovar 3 (strain ATCC 27815 / 27 / NCTC 11736)).